We begin with the raw amino-acid sequence, 252 residues long: MPSAPAAPAAPAAPDAAASVAPNPPAALPVTVRWLGETPYDACFDAMRAFTDARTPDTDDEIWVVEHPPVYTLGQAGNPAHLLVADSGVPLVKVDRGGQITYHGPGQIVAYLLVDLRRRKLMVRTLVTRIEEAVIETLAAYNLASARKAGAPGIYVESGPHRGAKIAALGLKIRNGCSYHGLSVNVKMDLRPFLAINPCGYAGLETIDMASLGATADWHEVAQTLVRRLIAHLDGATAAAALPQQALEQSND.

The span at Met-1–Ala-21 shows a compositional bias: low complexity. The tract at residues Met-1–Pro-22 is disordered. Residues Pro-56–Thr-237 enclose the BPL/LPL catalytic domain. Residues Arg-96–His-103, Ala-168–Gly-170, and Gly-181–Ser-183 contribute to the substrate site. Cys-199 serves as the catalytic Acyl-thioester intermediate.

This sequence belongs to the LipB family.

It localises to the cytoplasm. It carries out the reaction octanoyl-[ACP] + L-lysyl-[protein] = N(6)-octanoyl-L-lysyl-[protein] + holo-[ACP] + H(+). The protein operates within protein modification; protein lipoylation via endogenous pathway; protein N(6)-(lipoyl)lysine from octanoyl-[acyl-carrier-protein]: step 1/2. Catalyzes the transfer of endogenously produced octanoic acid from octanoyl-acyl-carrier-protein onto the lipoyl domains of lipoate-dependent enzymes. Lipoyl-ACP can also act as a substrate although octanoyl-ACP is likely to be the physiological substrate. The polypeptide is Octanoyltransferase (Burkholderia pseudomallei (strain 668)).